The primary structure comprises 379 residues: CCN family member 1 (379 aa).

Residues 1–24 form the signal peptide; it reads MSSSTIKTLAVAVTLLHLTRLALS. The 70-residue stretch at 25–94 folds into the IGFBP N-terminal domain; it reads TCPAACHCPL…TALKGICRAQ (70 aa). Disulfide bonds link C26–C50, C30–C52, C32–C53, C39–C56, C64–C78, and C70–C91. The VWFC domain occupies 98-164; it reads RPCEYNSRIY…GQCCEEWVCD (67 aa). The residue at position 184 (S184) is a Phosphoserine. The 46-residue stretch at 226–271 folds into the TSP type-1 domain; that stretch reads KCIVQTTSWSQCSKSCGTGISTRVTNDNSECRLVKETRICEVRPCG. The interval 277-313 is heparin-binding; it reads SLKKGKKCSKTKKSPEPVRFTYAGCSSVKKYRPKYCG. 5 disulfides stabilise this stretch: C284–C321, C301–C335, C312–C351, C315–C353, and C320–C357. Residues 284 to 358 enclose the CTCK domain; sequence CSKTKKSPEP…QSCKCNYNCP (75 aa).

This sequence belongs to the CCN family. As to quaternary structure, interaction with integrins is heparin- and cell-type-dependent and promotes cell adhesion.

It is found in the secreted. Functionally, promotes cell proliferation, chemotaxis, angiogenesis and cell adhesion. Appears to play a role in wound healing by up-regulating, in skin fibroblasts, the expression of a number of genes involved in angiogenesis, inflammation and matrix remodeling including VEGA-A, VEGA-C, MMP1, MMP3, TIMP1, uPA, PAI-1 and integrins alpha-3 and alpha-5. CCN1-mediated gene regulation is dependent on heparin-binding. Down-regulates the expression of alpha-1 and alpha-2 subunits of collagen type-1. Promotes cell adhesion and adhesive signaling through integrin alpha-6/beta-1, cell migration through integrin alpha-1/beta-5 and cell proliferation through integrin alpha-v/beta-3. The protein is CCN family member 1 of Rattus norvegicus (Rat).